The sequence spans 213 residues: uncharacterized protein (213 aa).

The signal sequence occupies residues 1–19 (MKKVLLLLFVLTIGLALSA). The N-palmitoyl cysteine moiety is linked to residue cysteine 20. The S-diacylglycerol cysteine moiety is linked to residue cysteine 20. The segment at 20–62 (CSQSSDASEKEKPKEKKSQEELEKELDKELKKGGEPKTKKDDQ) is disordered. Positions 26-62 (ASEKEKPKEKKSQEELEKELDKELKKGGEPKTKKDDQ) are enriched in basic and acidic residues.

It localises to the cell membrane. This is an uncharacterized protein from Bacillus subtilis (strain 168).